Reading from the N-terminus, the 705-residue chain is Tetratricopeptide repeat protein 12 (705 aa).

A Phosphothreonine modification is found at T71. TPR repeat units lie at residues 106 to 139, 140 to 173, and 174 to 207; these read ADALKEKGNEAFAEGNYETAILRYSEGLEKLKDM, KVLYTNRAQAYMKLEDYEKALVDCEWALKCDEKC, and TKAYFHMGKANLALKNYSVSRECYKKILEINPKL.

In terms of tissue distribution, expressed in testis and in epithelial cells of trachea and bronchial tube.

It localises to the cytoplasm. Cytoplasmic protein that plays a role in the proper assembly of dynein arm complexes in motile cilia in both respiratory cells and sperm flagella. The sequence is that of Tetratricopeptide repeat protein 12 (TTC12) from Homo sapiens (Human).